A 1024-amino-acid chain; its full sequence is Multidrug resistance protein MdtC (1024 aa).

The next 12 membrane-spanning stretches (helical) occupy residues 3-23 (FLSLFIYRPVATSLLTLALVL), 333-353 (EVEQSLAVSVGLVVLVVFAFL), 360-380 (LIPAVAVPVSLIGTFAAMYLC), 387-407 (LSLMALTVASGFVVDDAIVVL), 431-451 (VGFTVVSMSVSLIAVFIPLLM), 463-483 (FAITLSVSIAISLVISLTLTP), 528-548 (WALLVFVASLGLTVYLFISMP), 853-873 (LWLILAAIATVYIVLGMLYES), 875-895 (VHPLTILSTLPSAGMGALLAL), 897-917 (LFNTPFSLIALIGILLLIGIV), 953-973 (PIIMTTLAAMLGALPLVLSSG), and 984-1004 (ITIVGGLVVSQLLTLFTTPVV).

It belongs to the resistance-nodulation-cell division (RND) (TC 2.A.6) family. MdtC subfamily. Part of a tripartite efflux system composed of MdtA, MdtB and MdtC. MdtC forms a heteromultimer with MdtB.

It is found in the cell inner membrane. This is Multidrug resistance protein MdtC from Erwinia amylovora (strain ATCC 49946 / CCPPB 0273 / Ea273 / 27-3).